The sequence spans 500 residues: Glutamyl-tRNA(Gln) amidotransferase subunit A (500 aa).

Active-site charge relay system residues include lysine 81 and serine 161. The active-site Acyl-ester intermediate is the serine 185.

It belongs to the amidase family. GatA subfamily. Heterotrimer of A, B and C subunits.

It catalyses the reaction L-glutamyl-tRNA(Gln) + L-glutamine + ATP + H2O = L-glutaminyl-tRNA(Gln) + L-glutamate + ADP + phosphate + H(+). Functionally, allows the formation of correctly charged Gln-tRNA(Gln) through the transamidation of misacylated Glu-tRNA(Gln) in organisms which lack glutaminyl-tRNA synthetase. The reaction takes place in the presence of glutamine and ATP through an activated gamma-phospho-Glu-tRNA(Gln). The protein is Glutamyl-tRNA(Gln) amidotransferase subunit A of Rhodospirillum rubrum (strain ATCC 11170 / ATH 1.1.1 / DSM 467 / LMG 4362 / NCIMB 8255 / S1).